Consider the following 306-residue polypeptide: Methionyl-tRNA formyltransferase (306 aa).

Ser110–Pro113 lines the (6S)-5,6,7,8-tetrahydrofolate pocket.

It belongs to the Fmt family.

It catalyses the reaction L-methionyl-tRNA(fMet) + (6R)-10-formyltetrahydrofolate = N-formyl-L-methionyl-tRNA(fMet) + (6S)-5,6,7,8-tetrahydrofolate + H(+). Attaches a formyl group to the free amino group of methionyl-tRNA(fMet). The formyl group appears to play a dual role in the initiator identity of N-formylmethionyl-tRNA by promoting its recognition by IF2 and preventing the misappropriation of this tRNA by the elongation apparatus. This Brucella suis (strain ATCC 23445 / NCTC 10510) protein is Methionyl-tRNA formyltransferase.